The chain runs to 69 residues: Conotoxin SIVA (69 aa).

Positions Met-1 to Ser-21 are cleaved as a signal peptide. Residues Thr-22–Arg-38 constitute a propeptide that is removed on maturation. Pyrrolidone carboxylic acid is present on Gln-39. O-linked (HexNAc...) serine glycosylation occurs at Ser-45. 3 positions are modified to 4-hydroxyproline: Pro-55, Pro-60, and Pro-61. Cys-68 is subject to Cysteine amide.

The protein belongs to the conotoxin A superfamily. In terms of processing, contains 3 disulfide bonds. O-linked glycan consists of Hex3-HexNAc2 pentasaccharide. Expressed by the venom duct.

The protein localises to the secreted. Neurotoxin with probable activity on sodium channel. Induces intense repetitive firing of the frog neuromuscular junction, leading to a tetanic contracture in muscle fiber (spastic paralysis). In vivo, shows the same effect as the whole venom when injected on fish. Intraperitoneal injection into fish induces a period of rapid swimming followed by a spastic paralysis with stiff fibrillating fins. At high doses, the peptide is lethal to both fish and mice. The sequence is that of Conotoxin SIVA from Conus striatus (Striated cone).